The sequence spans 332 residues: Anthranilate phosphoribosyltransferase (332 aa).

5-phospho-alpha-D-ribose 1-diphosphate contacts are provided by residues Gly-79, 82 to 83, Thr-87, 89 to 92, 107 to 115, and Ser-119; these read GD, NIST, and KHGNRGVSS. Position 79 (Gly-79) interacts with anthranilate. Ser-91 contributes to the Mg(2+) binding site. Asn-110 contributes to the anthranilate binding site. Arg-165 contributes to the anthranilate binding site. Mg(2+) is bound by residues Asp-223 and Glu-224.

This sequence belongs to the anthranilate phosphoribosyltransferase family. Homodimer. It depends on Mg(2+) as a cofactor.

The enzyme catalyses N-(5-phospho-beta-D-ribosyl)anthranilate + diphosphate = 5-phospho-alpha-D-ribose 1-diphosphate + anthranilate. Its pathway is amino-acid biosynthesis; L-tryptophan biosynthesis; L-tryptophan from chorismate: step 2/5. Its function is as follows. Catalyzes the transfer of the phosphoribosyl group of 5-phosphorylribose-1-pyrophosphate (PRPP) to anthranilate to yield N-(5'-phosphoribosyl)-anthranilate (PRA). The sequence is that of Anthranilate phosphoribosyltransferase from Vibrio cholerae serotype O1 (strain ATCC 39541 / Classical Ogawa 395 / O395).